The primary structure comprises 429 residues: Enolase (429 aa).

Gln162 contributes to the (2R)-2-phosphoglycerate binding site. The Proton donor role is filled by Glu204. Residues Asp241, Glu283, and Asp310 each coordinate Mg(2+). (2R)-2-phosphoglycerate is bound by residues Lys335, Arg364, Ser365, and Lys386. Lys335 acts as the Proton acceptor in catalysis.

Belongs to the enolase family. Requires Mg(2+) as cofactor.

The protein resides in the cytoplasm. Its subcellular location is the secreted. It is found in the cell surface. The catalysed reaction is (2R)-2-phosphoglycerate = phosphoenolpyruvate + H2O. The protein operates within carbohydrate degradation; glycolysis; pyruvate from D-glyceraldehyde 3-phosphate: step 4/5. Catalyzes the reversible conversion of 2-phosphoglycerate (2-PG) into phosphoenolpyruvate (PEP). It is essential for the degradation of carbohydrates via glycolysis. The polypeptide is Enolase (Mycobacterium leprae (strain TN)).